The primary structure comprises 148 residues: MERCVVKVRRVRGGDQNLPCYMTVHAAGMDLCADLVDDLVLNPGERKLVPTGLAIALPDGFEAQIRPRSGLALKHGIALVNSPGTIDPDYRGEIGVILINHGSEPFVVRRGERIAQMVFAPFARAELVEVDELDETARGEGGFGHTGR.

Residues 68 to 70 (RSG), N81, and 85 to 87 (TID) contribute to the substrate site.

Belongs to the dUTPase family. Requires Mg(2+) as cofactor.

It carries out the reaction dUTP + H2O = dUMP + diphosphate + H(+). The protein operates within pyrimidine metabolism; dUMP biosynthesis; dUMP from dCTP (dUTP route): step 2/2. In terms of biological role, this enzyme is involved in nucleotide metabolism: it produces dUMP, the immediate precursor of thymidine nucleotides and it decreases the intracellular concentration of dUTP so that uracil cannot be incorporated into DNA. This is Deoxyuridine 5'-triphosphate nucleotidohydrolase from Geobacter metallireducens (strain ATCC 53774 / DSM 7210 / GS-15).